The sequence spans 412 residues: Sulfhydrogenase 2 subunit alpha (412 aa).

Ni(2+) contacts are provided by Cys-60, Cys-63, Cys-402, and Cys-405. Cys-63 is a Fe cation binding site. Cys-405 is a Fe cation binding site.

Belongs to the [NiFe]/[NiFeSe] hydrogenase large subunit family. Dimer of heterotetramer of alpha, beta, gamma and delta subunits. The nickel-containing alpha and delta subunits constitute the hydrogenase activity. The beta and gamma subunits (flavin-containing dimer) constitute the sulfur reductase activity. It depends on Ni(2+) as a cofactor. Fe cation is required as a cofactor.

It localises to the cytoplasm. It carries out the reaction H2 + NADP(+) = NADPH + H(+). The catalysed reaction is H2 + NAD(+) = NADH + H(+). Part of a bifunctional enzyme complex that functions as a hydrogen-evolving hydrogenase with sulfur-reducing activity. May play a role in hydrogen cycling during fermentative growth. Activity exhibited with NAD in addition to NADPH. The alpha and delta subunits form the hydrogenase component that catalyzes the reduction of protons to evolve hydrogen. The protein is Sulfhydrogenase 2 subunit alpha of Pyrococcus furiosus (strain ATCC 43587 / DSM 3638 / JCM 8422 / Vc1).